Here is a 491-residue protein sequence, read N- to C-terminus: Chondroitin proteoglycan 2 (491 aa).

Residues 1–18 form the signal peptide; the sequence is MKTIVALGLLALATAASG. The Chitin-binding type-2 1 domain occupies 21–78; it reads LQDCTNALDGLYAIGNCESQFLTCSGGIARIMDCPADLIYNEPLLICDWRHNVVGCEG. Cys-54 and Cys-67 are oxidised to a cystine. Positions 80–126 are disordered; it reads GEASGEQSGEGSGEASGEGSGEASGEGSGEASGEGSGSGEGSGEENN. The span at 87–120 shows a compositional bias: gly residues; it reads SGEGSGEASGEGSGEASGEGSGEASGEGSGSGEG. One can recognise a Chitin-binding type-2 2 domain in the interval 125–182; sequence NNVCEGLEDGAYSSGGCTTYYFFCTDNTARFLSCPTPLFYDVATQKCAWKALVEECNG. Cys-158 and Cys-171 are oxidised to a cystine. A disordered region spans residues 187 to 217; it reads DGSGETSGEGSGEASGENSGENSGEGSGEFE. O-linked (Xyl...) (chondroitin sulfate) serine glycosylation is found at Ser-197 and Ser-201. The span at 200-210 shows a compositional bias: low complexity; it reads ASGENSGENSG. 4 consecutive Chitin-binding type-2 domains span residues 217 to 274, 279 to 334, 367 to 423, and 436 to 491; these read EPTC…ECHG, APVC…ECQE, ENEC…KCLI, and PFDC…LQCH. 2 cysteine pairs are disulfide-bonded: Cys-250–Cys-263 and Cys-310–Cys-323. Residues 336-367 are disordered; sequence SGEESSGEASGEQSGEGSGEASGEASGEASGE. Residues 356–367 show a composition bias toward low complexity; it reads ASGEASGEASGE. Cys-399 and Cys-412 are joined by a disulfide. Asn-464 is a glycosylation site (N-linked (GlcNAc...) asparagine). Cys-467 and Cys-481 are joined by a disulfide.

Required for polar body extrusion during cytokinesis in embryo development. Affects cortical granule size. Shown to have roles in meiotic chromosome segregation, osmotic barrier function and polarization in conjunction with cpg-2. Binds chitin. The chain is Chondroitin proteoglycan 2 from Caenorhabditis briggsae.